The sequence spans 148 residues: 3-dehydroquinate dehydratase (148 aa).

Tyr-23 functions as the Proton acceptor in the catalytic mechanism. Residues Asn-75, His-81, and Asp-88 each coordinate substrate. Residue His-101 is the Proton donor of the active site. Substrate-binding positions include Leu-102–Ser-103 and Arg-112.

The protein belongs to the type-II 3-dehydroquinase family. As to quaternary structure, homododecamer.

It carries out the reaction 3-dehydroquinate = 3-dehydroshikimate + H2O. Its pathway is metabolic intermediate biosynthesis; chorismate biosynthesis; chorismate from D-erythrose 4-phosphate and phosphoenolpyruvate: step 3/7. Functionally, catalyzes a trans-dehydration via an enolate intermediate. This Xanthomonas campestris pv. campestris (strain 8004) protein is 3-dehydroquinate dehydratase.